The sequence spans 185 residues: Ribosome-recycling factor (185 aa).

Residues Met-136–Gln-161 form a disordered region.

The protein belongs to the RRF family.

The protein localises to the cytoplasm. Its function is as follows. Responsible for the release of ribosomes from messenger RNA at the termination of protein biosynthesis. May increase the efficiency of translation by recycling ribosomes from one round of translation to another. This Rhizorhabdus wittichii (strain DSM 6014 / CCUG 31198 / JCM 15750 / NBRC 105917 / EY 4224 / RW1) (Sphingomonas wittichii) protein is Ribosome-recycling factor.